The sequence spans 130 residues: Histone H2A type 2-B (130 aa).

The disordered stretch occupies residues 1 to 22 (MSGRGKQGGKARAKAKSRSSRA). N-acetylserine is present on Ser2. Ser2 carries the phosphoserine; by RPS6KA5 modification. Arg4 carries the citrulline; alternate modification. Arg4 is modified (symmetric dimethylarginine; by PRMT5; alternate). N6-(2-hydroxyisobutyryl)lysine is present on Lys6. A compositionally biased stretch (basic residues) spans 7–19 (QGGKARAKAKSRS). N6-(2-hydroxyisobutyryl)lysine; alternate is present on Lys10. 2 positions are modified to N6-(beta-hydroxybutyryl)lysine; alternate: Lys10 and Lys14. Position 10 is an N6-lactoyllysine; alternate (Lys10). Lys10 is modified (N6-succinyllysine; alternate). Residue Lys14 forms a Glycyl lysine isopeptide (Lys-Gly) (interchain with G-Cter in ubiquitin); alternate linkage. Lys16 is covalently cross-linked (Glycyl lysine isopeptide (Lys-Gly) (interchain with G-Cter in ubiquitin)). N6-(2-hydroxyisobutyryl)lysine; alternate is present on Lys37. Position 37 is an N6-(beta-hydroxybutyryl)lysine; alternate (Lys37). Lys37 is modified (N6-crotonyllysine; alternate). Residues Lys75 and Lys76 each carry the N6-(2-hydroxyisobutyryl)lysine modification. Residue Lys96 is modified to N6-(2-hydroxyisobutyryl)lysine; alternate. N6-(beta-hydroxybutyryl)lysine; alternate is present on Lys96. At Lys96 the chain carries N6-succinyllysine; alternate. Lys96 carries the N6-glutaryllysine; alternate modification. Gln105 carries the post-translational modification N5-methylglutamine. Lys119 carries the N6-(2-hydroxyisobutyryl)lysine; alternate modification. An N6-(beta-hydroxybutyryl)lysine; alternate modification is found at Lys119. N6-crotonyllysine; alternate is present on residues Lys119 and Lys120. 2 positions are modified to N6-glutaryllysine; alternate: Lys119 and Lys120. A Glycyl lysine isopeptide (Lys-Gly) (interchain with G-Cter in ubiquitin); alternate cross-link involves residue Lys120. At Thr121 the chain carries Phosphothreonine; by DCAF1.

Belongs to the histone H2A family. In terms of assembly, the nucleosome is a histone octamer containing two molecules each of H2A, H2B, H3 and H4 assembled in one H3-H4 heterotetramer and two H2A-H2B heterodimers. The octamer wraps approximately 147 bp of DNA. In terms of processing, deiminated on Arg-4 in granulocytes upon calcium entry. Monoubiquitination of Lys-120 (H2AK119Ub) by RING1, TRIM37 and RNF2/RING2 complex gives a specific tag for epigenetic transcriptional repression and participates in X chromosome inactivation of female mammals. It is involved in the initiation of both imprinted and random X inactivation. Ubiquitinated H2A is enriched in inactive X chromosome chromatin. Ubiquitination of H2A functions downstream of methylation of 'Lys-27' of histone H3 (H3K27me). H2AK119Ub by RNF2/RING2 can also be induced by ultraviolet and may be involved in DNA repair. Monoubiquitination of Lys-120 (H2AK119Ub) by TRIM37 may promote transformation of cells in a number of breast cancers. Following DNA double-strand breaks (DSBs), it is ubiquitinated through 'Lys-63' linkage of ubiquitin moieties by the E2 ligase UBE2N and the E3 ligases RNF8 and RNF168, leading to the recruitment of repair proteins to sites of DNA damage. Ubiquitination at Lys-14 and Lys-16 (H2AK13Ub and H2AK15Ub, respectively) in response to DNA damage is initiated by RNF168 that mediates monoubiquitination at these 2 sites, and 'Lys-63'-linked ubiquitin are then conjugated to monoubiquitin; RNF8 is able to extend 'Lys-63'-linked ubiquitin chains in vitro. Deubiquitinated by USP51 at Lys-14 and Lys-16 (H2AK13Ub and H2AK15Ub, respectively) after damaged DNA is repaired. H2AK119Ub and ionizing radiation-induced 'Lys-63'-linked ubiquitination (H2AK13Ub and H2AK15Ub) are distinct events. Post-translationally, phosphorylation on Ser-2 (H2AS1ph) is enhanced during mitosis. Phosphorylation on Ser-2 by RPS6KA5/MSK1 directly represses transcription. Acetylation of H3 inhibits Ser-2 phosphorylation by RPS6KA5/MSK1. Phosphorylation at Thr-121 (H2AT120ph) by DCAF1 is present in the regulatory region of many tumor suppresor genes and down-regulates their transcription. In terms of processing, symmetric dimethylation on Arg-4 by the PRDM1/PRMT5 complex may play a crucial role in the germ-cell lineage. Glutamine methylation at Gln-105 (H2AQ104me) by FBL is specifically dedicated to polymerase I. It is present at 35S ribosomal DNA locus and impairs binding of the FACT complex. Post-translationally, crotonylation (Kcr) is specifically present in male germ cells and marks testis-specific genes in post-meiotic cells, including X-linked genes that escape sex chromosome inactivation in haploid cells. Crotonylation marks active promoters and enhancers and confers resistance to transcriptional repressors. It is also associated with post-meiotically activated genes on autosomes. In terms of processing, lactylated in macrophages by EP300/P300 by using lactoyl-CoA directly derived from endogenous or exogenous lactate, leading to stimulates gene transcription.

It localises to the nucleus. The protein localises to the chromosome. In terms of biological role, core component of nucleosome. Nucleosomes wrap and compact DNA into chromatin, limiting DNA accessibility to the cellular machineries which require DNA as a template. Histones thereby play a central role in transcription regulation, DNA repair, DNA replication and chromosomal stability. DNA accessibility is regulated via a complex set of post-translational modifications of histones, also called histone code, and nucleosome remodeling. The chain is Histone H2A type 2-B from Homo sapiens (Human).